The following is a 200-amino-acid chain: MPIGTPSVPYRLPGSQMERWVDIYTRLGVERILFLGQEVSDGVANSLVAQMLYLDSEDSTKPIYLYINSPGGSVTAGLAIYDTMKYVKSDVVTICVGLAASMGAFLLTAGTKGKRLALPHSRIMIHQPLGGTNQRQASDIEIEAREILRIKDMLNHSMAELTGQSFEKIEKDTDRDYFLSAAEAKDYGLIDRVIAHPNEA.

Ser101 (nucleophile) is an active-site residue. His126 is a catalytic residue.

The protein belongs to the peptidase S14 family. As to quaternary structure, fourteen ClpP subunits assemble into 2 heptameric rings which stack back to back to give a disk-like structure with a central cavity, resembling the structure of eukaryotic proteasomes.

The protein localises to the cytoplasm. It catalyses the reaction Hydrolysis of proteins to small peptides in the presence of ATP and magnesium. alpha-casein is the usual test substrate. In the absence of ATP, only oligopeptides shorter than five residues are hydrolyzed (such as succinyl-Leu-Tyr-|-NHMec, and Leu-Tyr-Leu-|-Tyr-Trp, in which cleavage of the -Tyr-|-Leu- and -Tyr-|-Trp bonds also occurs).. Its function is as follows. Cleaves peptides in various proteins in a process that requires ATP hydrolysis. Has a chymotrypsin-like activity. Plays a major role in the degradation of misfolded proteins. The chain is ATP-dependent Clp protease proteolytic subunit 2 from Prochlorococcus marinus (strain MIT 9313).